Consider the following 148-residue polypeptide: Large ribosomal subunit protein bL9 (148 aa).

Belongs to the bacterial ribosomal protein bL9 family.

Binds to the 23S rRNA. This is Large ribosomal subunit protein bL9 from Leptospira biflexa serovar Patoc (strain Patoc 1 / Ames).